Consider the following 306-residue polypeptide: N-acetylmuramic acid/N-acetylglucosamine kinase (306 aa).

Ser12 serves as a coordination point for ATP. Asn35 contributes to the substrate binding site. Thr124 serves as a coordination point for ATP. Substrate contacts are provided by residues 142–144 (GWG) and Asp149. Position 208 (Ala208) interacts with ATP.

This sequence belongs to the eukaryotic-type N-acetylglucosamine kinase family. Mg(2+) serves as cofactor.

It is found in the cytoplasm. The enzyme catalyses N-acetyl-D-glucosamine + ATP = N-acetyl-D-glucosamine 6-phosphate + ADP + H(+). It catalyses the reaction N-acetyl-D-muramate + ATP = N-acetyl-D-muramate 6-phosphate + ADP + H(+). Its pathway is cell wall biogenesis; peptidoglycan recycling. In terms of biological role, catalyzes the ATP-dependent phosphorylation of both cell wall (peptidoglycan) amino sugars, N-acetylmuramic acid (MurNAc) and N-acetylglucosamine (GlcNAc), at the 6-hydroxyl group. Neither the non-N-acetylated forms of the cell wall sugars, i.e., glucosamine and/or muramic acid, nor epimeric hexoses or 1,6-anhydro-MurNAc are substrates for the enzyme. May have a role in the rescue of the murein sugars GlcNAc and MurNAc released from muropeptides during cell wall turnover in C.acetobutylicum. The protein is N-acetylmuramic acid/N-acetylglucosamine kinase of Clostridium acetobutylicum (strain ATCC 824 / DSM 792 / JCM 1419 / IAM 19013 / LMG 5710 / NBRC 13948 / NRRL B-527 / VKM B-1787 / 2291 / W).